The primary structure comprises 217 residues: Monomethylamine corrinoid protein 1 (217 aa).

The region spanning 1–91 (MANQEIFDKL…ELEKNKKEGE (91 aa)) is the B12-binding N-terminal domain. In terms of domain architecture, B12-binding spans 93-217 (AGLAITFVAE…AAKVALEVMK (125 aa)). Residue His106 coordinates methylcob(III)alamin.

Can form a complex with MtmB.

It functions in the pathway one-carbon metabolism; methanogenesis from methylamine. Acts as a methyl group carrier between MtmB and MtbA. The chain is Monomethylamine corrinoid protein 1 (mtmC1) from Methanosarcina barkeri.